The following is a 473-amino-acid chain: Mitochondrial distribution and morphology protein 10 (473 aa).

This sequence belongs to the MDM10 family. Component of the ER-mitochondria encounter structure (ERMES) or MDM complex, composed of MMM1, MDM10, MDM12 and MDM34. Associates with the mitochondrial outer membrane sorting assembly machinery SAM(core) complex.

The protein resides in the mitochondrion outer membrane. Its function is as follows. Component of the ERMES/MDM complex, which serves as a molecular tether to connect the endoplasmic reticulum and mitochondria. Components of this complex are involved in the control of mitochondrial shape and protein biogenesis and may function in phospholipid exchange. MDM10 is involved in the late assembly steps of the general translocase of the mitochondrial outer membrane (TOM complex). Functions in the TOM40-specific route of the assembly of outer membrane beta-barrel proteins, including the association of TOM40 with the receptor TOM22 and small TOM proteins. Can associate with the SAM(core) complex as well as the MDM12-MMM1 complex, both involved in late steps of the major beta-barrel assembly pathway, that is responsible for biogenesis of all outer membrane beta-barrel proteins. May act as a switch that shuttles between both complexes and channels precursor proteins into the TOM40-specific pathway. Plays a role in mitochondrial morphology and in the inheritance of mitochondria. This is Mitochondrial distribution and morphology protein 10 from Candida albicans (strain WO-1) (Yeast).